The sequence spans 126 residues: Fatty acid-binding protein, liver (126 aa).

An N-acetylalanine modification is found at A2.

It belongs to the calycin superfamily. Fatty-acid binding protein (FABP) family. In terms of tissue distribution, liver.

It is found in the cytoplasm. In terms of biological role, binds free fatty acids and their coenzyme A derivatives, bilirubin, and some other small molecules in the cytoplasm. May be involved in intracellular lipid transport this L-FABP binds only one fatty acid/molecule. Has more affinity for trans-parinaric acid than for cis-parinaric acid. The polypeptide is Fatty acid-binding protein, liver (fabp1) (Rhamdia sapo (South American catfish)).